Consider the following 65-residue polypeptide: Small ribosomal subunit protein bS21 (65 aa).

Basic residues predominate over residues 46-57; that stretch reads RLKRSRSKRRAQ. The disordered stretch occupies residues 46–65; the sequence is RLKRSRSKRRAQRANEERNS.

The protein belongs to the bacterial ribosomal protein bS21 family.

In Chlorobaculum tepidum (strain ATCC 49652 / DSM 12025 / NBRC 103806 / TLS) (Chlorobium tepidum), this protein is Small ribosomal subunit protein bS21.